The following is an 892-amino-acid chain: Putative leucine-rich repeat receptor-like serine/threonine-protein kinase At2g04300 (892 aa).

The signal sequence occupies residues 1–26; sequence MKTHPQAILLCVLFFITFGLLHVVEA. Over 27 to 523 the chain is Extracellular; sequence GNQEGFISLD…GAKKKNVVVL (497 aa). 5 N-linked (GlcNAc...) asparagine glycosylation sites follow: Asn-99, Asn-186, Asn-241, Asn-267, and Asn-294. LRR repeat units lie at residues 375–396, 399–422, 423–444, and 447–467; these read IKNI…PCVP, FMWD…FLNL, SSSH…LQNL, and SNNN…SLLV. Residues Asn-407, Asn-421, Asn-437, Asn-450, and Asn-469 are each glycosylated (N-linked (GlcNAc...) asparagine). Residues 524–544 form a helical membrane-spanning segment; it reads VVVSIALVVVLGSALALFLVF. Topologically, residues 545–892 are cytoplasmic; it reads RKRKTPRNEV…FGTEYTPEAR (348 aa). Residue Thr-573 is modified to Phosphothreonine. The Protein kinase domain maps to 582–855; that stretch reads NNFEKILGKG…QVVIELNECL (274 aa). Residues 588 to 596 and Lys-610 contribute to the ATP site; that span reads LGKGGFGMV. Tyr-655 is modified (phosphotyrosine). Asp-707 acts as the Proton acceptor in catalysis. Residues Thr-742 and Thr-747 each carry the phosphothreonine modification. A Phosphotyrosine modification is found at Tyr-755.

Belongs to the protein kinase superfamily. Ser/Thr protein kinase family.

Its subcellular location is the cell membrane. It carries out the reaction L-seryl-[protein] + ATP = O-phospho-L-seryl-[protein] + ADP + H(+). The enzyme catalyses L-threonyl-[protein] + ATP = O-phospho-L-threonyl-[protein] + ADP + H(+). This chain is Putative leucine-rich repeat receptor-like serine/threonine-protein kinase At2g04300, found in Arabidopsis thaliana (Mouse-ear cress).